Here is a 292-residue protein sequence, read N- to C-terminus: Acetylglutamate kinase (292 aa).

Substrate-binding positions include 64–65, Arg-86, and Asn-190; that span reads GG.

Belongs to the acetylglutamate kinase family. ArgB subfamily.

The protein resides in the cytoplasm. The enzyme catalyses N-acetyl-L-glutamate + ATP = N-acetyl-L-glutamyl 5-phosphate + ADP. Its pathway is amino-acid biosynthesis; L-arginine biosynthesis; N(2)-acetyl-L-ornithine from L-glutamate: step 2/4. Catalyzes the ATP-dependent phosphorylation of N-acetyl-L-glutamate. The chain is Acetylglutamate kinase from Leptospira biflexa serovar Patoc (strain Patoc 1 / Ames).